A 463-amino-acid polypeptide reads, in one-letter code: Argininosuccinate lyase (463 aa).

Belongs to the lyase 1 family. Argininosuccinate lyase subfamily.

The protein localises to the cytoplasm. The enzyme catalyses 2-(N(omega)-L-arginino)succinate = fumarate + L-arginine. It participates in amino-acid biosynthesis; L-arginine biosynthesis; L-arginine from L-ornithine and carbamoyl phosphate: step 3/3. The sequence is that of Argininosuccinate lyase from Methylorubrum extorquens (strain CM4 / NCIMB 13688) (Methylobacterium extorquens).